We begin with the raw amino-acid sequence, 465 residues long: Ribulose bisphosphate carboxylase large chain (465 aa).

Lysine 4 is modified (N6,N6,N6-trimethyllysine). Substrate-binding residues include asparagine 113 and threonine 163. The active-site Proton acceptor is the lysine 165. Lysine 167 lines the substrate pocket. Mg(2+) is bound by residues lysine 191, aspartate 193, and glutamate 194. Lysine 191 is subject to N6-carboxylysine. Residue histidine 284 is the Proton acceptor of the active site. 3 residues coordinate substrate: arginine 285, histidine 317, and serine 369.

It belongs to the RuBisCO large chain family. Type I subfamily. In terms of assembly, heterohexadecamer of 8 large chains and 8 small chains; disulfide-linked. The disulfide link is formed within the large subunit homodimers. It depends on Mg(2+) as a cofactor. In terms of processing, the disulfide bond which can form in the large chain dimeric partners within the hexadecamer appears to be associated with oxidative stress and protein turnover.

It is found in the plastid. The protein localises to the chloroplast. It carries out the reaction 2 (2R)-3-phosphoglycerate + 2 H(+) = D-ribulose 1,5-bisphosphate + CO2 + H2O. The catalysed reaction is D-ribulose 1,5-bisphosphate + O2 = 2-phosphoglycolate + (2R)-3-phosphoglycerate + 2 H(+). Its function is as follows. RuBisCO catalyzes two reactions: the carboxylation of D-ribulose 1,5-bisphosphate, the primary event in carbon dioxide fixation, as well as the oxidative fragmentation of the pentose substrate in the photorespiration process. Both reactions occur simultaneously and in competition at the same active site. The protein is Ribulose bisphosphate carboxylase large chain of Platytheca verticillata.